The chain runs to 790 residues: Serine/threonine-protein kinase DCLK3 (790 aa).

Positions 1–37 are disordered; it reads MPAAPVLRPPPPPATPAPPAPSRPAPPIPGHRGPCDH. A compositionally biased stretch (pro residues) spans 7–29; the sequence is LRPPPPPATPAPPAPSRPAPPIP. The Doublecortin domain occupies 97–183; the sequence is RVVTVVKLGG…KEPLTLKSIQ (87 aa). The span at 201–218 shows a compositional bias: low complexity; it reads HSRVPSPRLRSRLPSKLL. Disordered regions lie at residues 201 to 290 and 315 to 506; these read HSRV…SGEK and LQLG…KGII. Composition is skewed to basic and acidic residues over residues 332-345, 352-400, 425-434, and 457-496; these read DLGR…EKLV, RPSE…ESQD, IDMRREDRHT, and TRGE…ERPS. Residues 514–771 form the Protein kinase domain; the sequence is YDIGGVIGDG…AEQVLQHPWI (258 aa). ATP-binding positions include 520 to 528 and Lys543; that span reads IGDGNFATV. Asp635 functions as the Proton acceptor in the catalytic mechanism.

It belongs to the protein kinase superfamily. CAMK Ser/Thr protein kinase family. CaMK subfamily. Highly expressed in brain and to a lower extent in liver and kidney.

Its subcellular location is the cytoplasm. The protein resides in the nucleus. It catalyses the reaction L-seryl-[protein] + ATP = O-phospho-L-seryl-[protein] + ADP + H(+). It carries out the reaction L-threonyl-[protein] + ATP = O-phospho-L-threonyl-[protein] + ADP + H(+). In Mus musculus (Mouse), this protein is Serine/threonine-protein kinase DCLK3 (Dclk3).